Here is a 330-residue protein sequence, read N- to C-terminus: 4-epi-cubebol synthase ((2E,6E)-farnesyl diphosphate cyclizing) (330 aa).

Residues Asp91 and Glu96 each coordinate Mg(2+). The DDXXXE motif motif lies at 91–96; that stretch reads DDAFCE. Substrate is bound at residue Arg184. Mg(2+)-binding residues include Asn230 and Ser234. Lys237 serves as a coordination point for substrate. Mg(2+) is bound at residue Glu238. 316–317 is a substrate binding site; it reads RY.

The protein belongs to the terpene synthase family. Requires Mg(2+) as cofactor.

The catalysed reaction is (2E,6E)-farnesyl diphosphate + H2O = 4-epi-cubebol + diphosphate. It participates in secondary metabolite biosynthesis; terpenoid biosynthesis. Catalyzes the conversion of (2E,6E)-farnesyl diphosphate (FPP) to yield the bicyclic sesquiterpenol 4-epi-cubebol via a 1,10-cyclization, which requires the abstraction of the pyrophosphate from FPP to yield a (E,E)-germacradienyl cation. The only accepted substrate is (2E,6E)-farnesyl diphosphate (FPP). The protein is 4-epi-cubebol synthase ((2E,6E)-farnesyl diphosphate cyclizing) of Streptosporangium roseum (strain ATCC 12428 / DSM 43021 / JCM 3005 / KCTC 9067 / NCIMB 10171 / NRRL 2505 / NI 9100).